The primary structure comprises 170 residues: MRHNRHINHLGRTHSHRKALLSNMAVSLIKHKRIFTTLAKAKEFCKYVEPILTRSRNDTTHSRRLVFRKLCDKYAVSELFREIARKIGDRPGGYTRIIKIGNRLGDNAATCFIELVDYNELMLKTAHGGATNKIRRSRRSSPHKRDINERNNIIQEDNAMTKTIEEAKGE.

This sequence belongs to the bacterial ribosomal protein bL17 family. As to quaternary structure, part of the 50S ribosomal subunit. Contacts protein L32.

The sequence is that of Large ribosomal subunit protein bL17 from Azobacteroides pseudotrichonymphae genomovar. CFP2.